A 284-amino-acid chain; its full sequence is Parvulin-like PPIase (284 aa).

Residues 1 to 20 (MKKLSIVLLSVSMLSSIAFA) form the signal peptide. In terms of domain architecture, PpiC spans 139 to 232 (KEQIKVAHIL…YGWHIIKVLE (94 aa)).

The protein belongs to the PpiC/parvulin rotamase family.

It is found in the cell outer membrane. It catalyses the reaction [protein]-peptidylproline (omega=180) = [protein]-peptidylproline (omega=0). This chain is Parvulin-like PPIase (plp), found in Rickettsia bellii (strain RML369-C).